Consider the following 492-residue polypeptide: N-succinylglutamate 5-semialdehyde dehydrogenase (492 aa).

220–225 (GSASTG) contributes to the NAD(+) binding site. Residues glutamate 243 and cysteine 277 contribute to the active site.

The protein belongs to the aldehyde dehydrogenase family. AstD subfamily.

The enzyme catalyses N-succinyl-L-glutamate 5-semialdehyde + NAD(+) + H2O = N-succinyl-L-glutamate + NADH + 2 H(+). It functions in the pathway amino-acid degradation; L-arginine degradation via AST pathway; L-glutamate and succinate from L-arginine: step 4/5. In terms of biological role, catalyzes the NAD-dependent reduction of succinylglutamate semialdehyde into succinylglutamate. This is N-succinylglutamate 5-semialdehyde dehydrogenase from Salmonella paratyphi A (strain AKU_12601).